Consider the following 98-residue polypeptide: Phosphoribosyl-ATP pyrophosphatase (98 aa).

This sequence belongs to the PRA-PH family.

It localises to the cytoplasm. It catalyses the reaction 1-(5-phospho-beta-D-ribosyl)-ATP + H2O = 1-(5-phospho-beta-D-ribosyl)-5'-AMP + diphosphate + H(+). It functions in the pathway amino-acid biosynthesis; L-histidine biosynthesis; L-histidine from 5-phospho-alpha-D-ribose 1-diphosphate: step 2/9. The protein is Phosphoribosyl-ATP pyrophosphatase of Haloarcula marismortui (strain ATCC 43049 / DSM 3752 / JCM 8966 / VKM B-1809) (Halobacterium marismortui).